A 227-amino-acid polypeptide reads, in one-letter code: Guanylate kinase (227 aa).

The region spanning 21–199 (GNLFMVVAPS…ALAELECIVA (179 aa)) is the Guanylate kinase-like domain. Position 28 to 35 (28 to 35 (APSGAGKS)) interacts with ATP.

Belongs to the guanylate kinase family.

The protein localises to the cytoplasm. It catalyses the reaction GMP + ATP = GDP + ADP. Essential for recycling GMP and indirectly, cGMP. The sequence is that of Guanylate kinase from Burkholderia lata (strain ATCC 17760 / DSM 23089 / LMG 22485 / NCIMB 9086 / R18194 / 383).